Consider the following 177-residue polypeptide: Transcription antitermination protein NusB (177 aa).

The segment at 1–36 (MTEQPTKPTGSRPPRQPRTGLTSTGARKAGSKSDRS) is disordered.

The protein belongs to the NusB family.

Functionally, involved in transcription antitermination. Required for transcription of ribosomal RNA (rRNA) genes. Binds specifically to the boxA antiterminator sequence of the ribosomal RNA (rrn) operons. The polypeptide is Transcription antitermination protein NusB (Albidiferax ferrireducens (strain ATCC BAA-621 / DSM 15236 / T118) (Rhodoferax ferrireducens)).